A 166-amino-acid chain; its full sequence is Large ribosomal subunit protein uL10 (166 aa).

Belongs to the universal ribosomal protein uL10 family. As to quaternary structure, part of the ribosomal stalk of the 50S ribosomal subunit. The N-terminus interacts with L11 and the large rRNA to form the base of the stalk. The C-terminus forms an elongated spine to which L12 dimers bind in a sequential fashion forming a multimeric L10(L12)X complex.

Forms part of the ribosomal stalk, playing a central role in the interaction of the ribosome with GTP-bound translation factors. This is Large ribosomal subunit protein uL10 from Shewanella baltica (strain OS223).